The sequence spans 118 residues: Large ribosomal subunit protein uL18 (118 aa).

The segment at 1–24 (MISKPDKNKIRQKRHRRVRGKLSG) is disordered. A compositionally biased stretch (basic residues) spans 10-20 (IRQKRHRRVRG).

It belongs to the universal ribosomal protein uL18 family. Part of the 50S ribosomal subunit; part of the 5S rRNA/L5/L18/L25 subcomplex. Contacts the 5S and 23S rRNAs.

This is one of the proteins that bind and probably mediate the attachment of the 5S RNA into the large ribosomal subunit, where it forms part of the central protuberance. In Streptococcus mutans serotype c (strain ATCC 700610 / UA159), this protein is Large ribosomal subunit protein uL18.